Here is a 303-residue protein sequence, read N- to C-terminus: Recombination-associated protein RdgC (303 aa).

This sequence belongs to the RdgC family.

The protein resides in the cytoplasm. The protein localises to the nucleoid. Its function is as follows. May be involved in recombination. This Shewanella frigidimarina (strain NCIMB 400) protein is Recombination-associated protein RdgC.